The chain runs to 294 residues: Potassium-transporting ATPase subunit beta (294 aa).

Residues methionine 1–arginine 36 are Cytoplasmic-facing. The chain crosses the membrane as a helical; Signal-anchor for type II membrane protein span at residues tryptophan 37–leucine 57. At cysteine 58 to lysine 294 the chain is on the extracellular side. Residues asparagine 99, asparagine 103, asparagine 130, asparagine 146, and asparagine 161 are each glycosylated (N-linked (GlcNAc...) asparagine). Cysteine 131 and cysteine 152 are joined by a disulfide. Cysteine 162 and cysteine 178 are joined by a disulfide. N-linked (GlcNAc...) asparagine glycosylation is found at asparagine 193 and asparagine 225. The immunoglobulin-like stretch occupies residues asparagine 194–lysine 294. Cysteine 201 and cysteine 266 are oxidised to a cystine.

It belongs to the X(+)/potassium ATPases subunit beta family. In terms of assembly, the ATPase pump is composed of two subunits: alpha (catalytic) and beta (regulatory). Interacts with alpha subunit ATP12A; this interaction is required for the formation of a functionally active pump and targeting at the plasma membrane. Interacts (via N-terminus) with alpha subunit ATP4A (via the P-domain). N-glycosylation is necessary for assembly and functional expression of the pump at the plasma membrane. In terms of tissue distribution, stomach.

It is found in the apical cell membrane. The protein resides in the cell membrane. The beta subunit of the gastric H(+)/K(+) ATPase pump which transports H(+) ions in exchange for K(+) ions across the apical membrane of parietal cells. Plays a structural and regulatory role in the assembly and membrane targeting of a functionally active pump. Within a transport cycle, the transfer of a H(+) ion across the membrane is coupled to ATP hydrolysis and is associated with a transient phosphorylation of the alpha subunit that shifts the pump conformation from inward-facing (E1) to outward-facing state (E2). Interacts with the phosphorylation domain of the alpha subunit and functions as a ratchet, stabilizing the lumenal-open E2 conformation and preventing the reverse reaction of the transport cycle. The polypeptide is Potassium-transporting ATPase subunit beta (Atp4b) (Rattus norvegicus (Rat)).